The primary structure comprises 124 residues: Small ribosomal subunit protein uS12 (124 aa).

The tract at residues 1-28 (MPTIQQLIRTERQSSKAKTKSPALKSCP) is disordered. The residue at position 89 (aspartate 89) is a 3-methylthioaspartic acid. The segment at 104 to 124 (TAGVKDRRQSRSKYGAKTPKE) is disordered.

Belongs to the universal ribosomal protein uS12 family. Part of the 30S ribosomal subunit. Contacts proteins S8 and S17. May interact with IF1 in the 30S initiation complex.

In terms of biological role, with S4 and S5 plays an important role in translational accuracy. Functionally, interacts with and stabilizes bases of the 16S rRNA that are involved in tRNA selection in the A site and with the mRNA backbone. Located at the interface of the 30S and 50S subunits, it traverses the body of the 30S subunit contacting proteins on the other side and probably holding the rRNA structure together. The combined cluster of proteins S8, S12 and S17 appears to hold together the shoulder and platform of the 30S subunit. This Synechococcus sp. (strain WH7803) protein is Small ribosomal subunit protein uS12.